The chain runs to 180 residues: Large ribosomal subunit protein uL6 (180 aa).

It belongs to the universal ribosomal protein uL6 family. In terms of assembly, part of the 50S ribosomal subunit.

Functionally, this protein binds to the 23S rRNA, and is important in its secondary structure. It is located near the subunit interface in the base of the L7/L12 stalk, and near the tRNA binding site of the peptidyltransferase center. The sequence is that of Large ribosomal subunit protein uL6 from Prosthecochloris aestuarii (strain DSM 271 / SK 413).